A 591-amino-acid polypeptide reads, in one-letter code: Dihydroxyacetone kinase 2 (591 aa).

In terms of domain architecture, DhaK spans 8–344; it reads SDGNIVTPYL…FDYPTTASGW (337 aa). The tract at residues 40–59 is disordered; that stretch reads ASAPNSGNPPKVSLVSGGGS. Substrate-binding positions include 58-61, lysine 109, and aspartate 114; that span reads GSGH. Catalysis depends on histidine 223, which acts as the Tele-hemiaminal-histidine intermediate. A DhaL domain is found at 384 to 587; the sequence is DTFAKILLAG…LAALLDGFVT (204 aa). ATP contacts are provided by residues 413–416, 459–460, 511–512, and 572–574; these read DGDC, TS, TL, and DPG.

The protein belongs to the dihydroxyacetone kinase (DAK) family.

The catalysed reaction is dihydroxyacetone + ATP = dihydroxyacetone phosphate + ADP + H(+). The enzyme catalyses D-glyceraldehyde + ATP = D-glyceraldehyde 3-phosphate + ADP + H(+). Its pathway is polyol metabolism; glycerol fermentation; glycerone phosphate from glycerol (oxidative route): step 2/2. In terms of biological role, catalyzes both the phosphorylation of dihydroxyacetone and of glyceraldehyde. This chain is Dihydroxyacetone kinase 2 (DAK2), found in Saccharomyces cerevisiae (strain ATCC 204508 / S288c) (Baker's yeast).